A 427-amino-acid polypeptide reads, in one-letter code: Serine--tRNA ligase (427 aa).

Residue 233 to 235 (TAE) participates in L-serine binding. 264–266 (RSE) provides a ligand contact to ATP. E287 contacts L-serine. 351–354 (EISS) serves as a coordination point for ATP. An L-serine-binding site is contributed by S386.

The protein belongs to the class-II aminoacyl-tRNA synthetase family. Type-1 seryl-tRNA synthetase subfamily. Homodimer. The tRNA molecule binds across the dimer.

The protein resides in the cytoplasm. It carries out the reaction tRNA(Ser) + L-serine + ATP = L-seryl-tRNA(Ser) + AMP + diphosphate + H(+). The enzyme catalyses tRNA(Sec) + L-serine + ATP = L-seryl-tRNA(Sec) + AMP + diphosphate + H(+). It participates in aminoacyl-tRNA biosynthesis; selenocysteinyl-tRNA(Sec) biosynthesis; L-seryl-tRNA(Sec) from L-serine and tRNA(Sec): step 1/1. Functionally, catalyzes the attachment of serine to tRNA(Ser). Is also able to aminoacylate tRNA(Sec) with serine, to form the misacylated tRNA L-seryl-tRNA(Sec), which will be further converted into selenocysteinyl-tRNA(Sec). This Dechloromonas aromatica (strain RCB) protein is Serine--tRNA ligase.